The primary structure comprises 447 residues: UDP-N-acetylmuramate--L-alanine ligase (447 aa).

108 to 114 (GSHGKTS) is a binding site for ATP.

Belongs to the MurCDEF family.

The protein localises to the cytoplasm. It carries out the reaction UDP-N-acetyl-alpha-D-muramate + L-alanine + ATP = UDP-N-acetyl-alpha-D-muramoyl-L-alanine + ADP + phosphate + H(+). The protein operates within cell wall biogenesis; peptidoglycan biosynthesis. Its function is as follows. Cell wall formation. This Listeria welshimeri serovar 6b (strain ATCC 35897 / DSM 20650 / CCUG 15529 / CIP 8149 / NCTC 11857 / SLCC 5334 / V8) protein is UDP-N-acetylmuramate--L-alanine ligase.